A 30-amino-acid chain; its full sequence is Urease subunit alpha (30 aa).

The protein belongs to the metallo-dependent hydrolases superfamily. Urease alpha subunit family. In terms of assembly, heterotrimer of UreA (gamma), UreB (beta) and UreC (alpha) subunits. Three heterotrimers associate to form the active enzyme. Requires Ni cation as cofactor.

The protein localises to the cytoplasm. It catalyses the reaction urea + 2 H2O + H(+) = hydrogencarbonate + 2 NH4(+). Its pathway is nitrogen metabolism; urea degradation; CO(2) and NH(3) from urea (urease route): step 1/1. The chain is Urease subunit alpha (ureC) from Escherichia coli.